The chain runs to 354 residues: Ion-translocating oxidoreductase complex subunit D (354 aa).

3 helical membrane-spanning segments follow: residues 9 to 28 (IMLH…LYLF), 67 to 87 (LLSG…WIAV), and 117 to 137 (VALL…LPLG). At T165 the chain carries FMN phosphoryl threonine. 5 consecutive transmembrane segments (helical) span residues 200 to 220 (GSLG…LLAL), 222 to 242 (IIHW…AALA), 249 to 269 (VHGG…ALFI), 277 to 297 (PISR…VFVI), and 301 to 321 (GNFP…VPLI).

This sequence belongs to the NqrB/RnfD family. The complex is composed of six subunits: RnfA, RnfB, RnfC, RnfD, RnfE and RnfG. It depends on FMN as a cofactor.

It is found in the cell inner membrane. In terms of biological role, part of a membrane-bound complex that couples electron transfer with translocation of ions across the membrane. This is Ion-translocating oxidoreductase complex subunit D from Stutzerimonas stutzeri (Pseudomonas stutzeri).